We begin with the raw amino-acid sequence, 491 residues long: Phosphatidylglycerol--prolipoprotein diacylglyceryl transferase (491 aa).

Transmembrane regions (helical) follow at residues 24–44, 58–78, and 98–118; these read IPLR…IWWG, VLDV…AYHV, and IWQG…GAWI. R146 contacts a 1,2-diacyl-sn-glycero-3-phospho-(1'-sn-glycerol). 2 helical membrane-spanning segments follow: residues 192–212 and 256–276; these read IVHP…IALV and INNF…VFAT. Over residues 309–323 the composition is skewed to low complexity; it reads NGPAEPGATASTATD. The segment at 309–491 is disordered; that stretch reads NGPAEPGATA…DRVDSGENDA (183 aa). Residues 347–360 show a composition bias toward basic and acidic residues; sequence KGDRGTADAADTAK. Composition is skewed to low complexity over residues 361 to 387, 394 to 406, and 415 to 438; these read DASA…GSSD, AVKA…AAEK, and AGEA…SAKS. Positions 453–462 are enriched in basic and acidic residues; the sequence is NESESTRDNE. The span at 463–481 shows a compositional bias: low complexity; it reads STSAGTAASATGSAGAGAT. Residues 482-491 are compositionally biased toward basic and acidic residues; that stretch reads DRVDSGENDA.

Belongs to the Lgt family.

Its subcellular location is the cell membrane. The catalysed reaction is L-cysteinyl-[prolipoprotein] + a 1,2-diacyl-sn-glycero-3-phospho-(1'-sn-glycerol) = an S-1,2-diacyl-sn-glyceryl-L-cysteinyl-[prolipoprotein] + sn-glycerol 1-phosphate + H(+). It functions in the pathway protein modification; lipoprotein biosynthesis (diacylglyceryl transfer). Functionally, catalyzes the transfer of the diacylglyceryl group from phosphatidylglycerol to the sulfhydryl group of the N-terminal cysteine of a prolipoprotein, the first step in the formation of mature lipoproteins. The sequence is that of Phosphatidylglycerol--prolipoprotein diacylglyceryl transferase from Nocardia farcinica (strain IFM 10152).